Here is a 238-residue protein sequence, read N- to C-terminus: Pyridoxine 5'-phosphate synthase (238 aa).

N7 lines the 3-amino-2-oxopropyl phosphate pocket. 9–10 provides a ligand contact to 1-deoxy-D-xylulose 5-phosphate; sequence DH. R18 serves as a coordination point for 3-amino-2-oxopropyl phosphate. The active-site Proton acceptor is the H43. The 1-deoxy-D-xylulose 5-phosphate site is built by R45 and H50. E70 serves as the catalytic Proton acceptor. Position 100 (T100) interacts with 1-deoxy-D-xylulose 5-phosphate. Residue H190 is the Proton donor of the active site. 3-amino-2-oxopropyl phosphate-binding positions include G191 and 212–213; that span reads GH.

The protein belongs to the PNP synthase family. Homooctamer; tetramer of dimers.

The protein localises to the cytoplasm. It catalyses the reaction 3-amino-2-oxopropyl phosphate + 1-deoxy-D-xylulose 5-phosphate = pyridoxine 5'-phosphate + phosphate + 2 H2O + H(+). Its pathway is cofactor biosynthesis; pyridoxine 5'-phosphate biosynthesis; pyridoxine 5'-phosphate from D-erythrose 4-phosphate: step 5/5. Catalyzes the complicated ring closure reaction between the two acyclic compounds 1-deoxy-D-xylulose-5-phosphate (DXP) and 3-amino-2-oxopropyl phosphate (1-amino-acetone-3-phosphate or AAP) to form pyridoxine 5'-phosphate (PNP) and inorganic phosphate. This chain is Pyridoxine 5'-phosphate synthase, found in Prochlorococcus marinus (strain MIT 9515).